Consider the following 488-residue polypeptide: Eukaryotic translation initiation factor 3 subunit L (488 aa).

2 disordered regions span residues 1–34 and 427–449; these read MSLPQHQNRDAARRAPDDDDDAEEETMANDYREQ and SEGGLLERRGDPQQRSRLRHGKE. Basic and acidic residues predominate over residues 7-16; it reads QNRDAARRAP. The segment covering 17–27 has biased composition (acidic residues); sequence DDDDDAEEETM. Positions 256–450 constitute a PCI domain; it reads DAIRMFSHIL…RSRLRHGKEI (195 aa). Over residues 431–440 the composition is skewed to basic and acidic residues; the sequence is LLERRGDPQQ.

Belongs to the eIF-3 subunit L family. As to quaternary structure, component of the eukaryotic translation initiation factor 3 (eIF-3) complex.

It localises to the cytoplasm. In terms of biological role, component of the eukaryotic translation initiation factor 3 (eIF-3) complex, which is involved in protein synthesis of a specialized repertoire of mRNAs and, together with other initiation factors, stimulates binding of mRNA and methionyl-tRNAi to the 40S ribosome. The eIF-3 complex specifically targets and initiates translation of a subset of mRNAs involved in cell proliferation. The chain is Eukaryotic translation initiation factor 3 subunit L from Phaeosphaeria nodorum (strain SN15 / ATCC MYA-4574 / FGSC 10173) (Glume blotch fungus).